The primary structure comprises 715 residues: NADH-ubiquinone oxidoreductase chain 5 (715 aa).

17 helical membrane-spanning segments follow: residues 1 to 21, 30 to 50, 81 to 101, 119 to 139, 140 to 160, 177 to 197, 200 to 220, 241 to 261, 274 to 294, 310 to 330, 331 to 351, 366 to 386, 403 to 423, 487 to 507, 543 to 563, 647 to 667, and 668 to 688; these read MYLS…FFGR, LITC…FFEV, LTVA…IYSI, LFTF…MFVG, WEGV…RIAA, FLTI…YATV, LAPY…LIGA, TPVS…YLLM, LLLC…IGLF, LGMM…FHLI, NHAF…HAVA, LPLT…FPYM, FSFS…FTTL, GFFL…FGFI, TLFK…ALVL, IVTN…FTFI, and SLLE…LSLT.

This sequence belongs to the complex I subunit 5 family.

The protein resides in the mitochondrion inner membrane. It catalyses the reaction a ubiquinone + NADH + 5 H(+)(in) = a ubiquinol + NAD(+) + 4 H(+)(out). Its function is as follows. Core subunit of the mitochondrial membrane respiratory chain NADH dehydrogenase (Complex I) that is believed to belong to the minimal assembly required for catalysis. Complex I functions in the transfer of electrons from NADH to the respiratory chain. The immediate electron acceptor for the enzyme is believed to be ubiquinone. This is NADH-ubiquinone oxidoreductase chain 5 (ndh-5) from Neurospora crassa (strain ATCC 24698 / 74-OR23-1A / CBS 708.71 / DSM 1257 / FGSC 987).